Here is a 183-residue protein sequence, read N- to C-terminus: Archaemetzincin (183 aa).

His131 provides a ligand contact to Zn(2+). The active-site Proton acceptor is the Glu132. Residues His135, His141, Cys142, Cys147, Cys166, and Cys169 each contribute to the Zn(2+) site.

The protein belongs to the peptidase M54 family. In terms of assembly, monomer. Requires Zn(2+) as cofactor.

Probable zinc metalloprotease whose natural substrate is unknown. In Saccharolobus islandicus (strain Y.N.15.51 / Yellowstone #2) (Sulfolobus islandicus), this protein is Archaemetzincin.